The following is a 7639-amino-acid chain: Nonribosomal peptide synthetase 4 (7639 aa).

Positions 244–636 (WQGAMRPDAE…AGRKDAQIKF (393 aa)) are adenylation 1. The 77-residue stretch at 776 to 852 (TFSNGTESQL…ALARHVKEIE (77 aa)) folds into the Carrier 1 domain. Residue S813 is modified to O-(pantetheine 4'-phosphoryl)serine. The interval 865-1295 (FELSPIQRLY…EQNLSLLVES (431 aa)) is epimerization 1. The tract at residues 1337 to 1767 (VEDIYPCSPM…HLGPRHHQQI (431 aa)) is condensation 1. Residues 1786-2181 (FEEQAILRPE…FGRKDTQVKL (396 aa)) are adenylation 2. The Carrier 2 domain maps to 2313-2389 (APASDMEKQL…DMAQSALPLS (77 aa)). Position 2350 is an O-(pantetheine 4'-phosphoryl)serine (S2350). A condensation 2 region spans residues 2426–2852 (VEDIYPCTPL…LISTRDYQSL (427 aa)). The interval 2878–3269 (QPLDKLAVCA…QGRKDNQVKI (392 aa)) is adenylation 3. Positions 3403-3479 (REATETETKL…KLASFVQAVE (77 aa)) constitute a Carrier 3 domain. S3440 carries the post-translational modification O-(pantetheine 4'-phosphoryl)serine. An epimerization 2 region spans residues 3491 to 3928 (AFPLSPIQKL…RMTQAKAEPQ (438 aa)). The tract at residues 3961 to 4389 (EAVYPCSPVQ…VSDDCAQQLT (429 aa)) is condensation 3. The tract at residues 4407–4810 (FERNVQSLPH…VSRKDTQIKL (404 aa)) is adenylation 4. A Carrier 4 domain is found at 4944–5020 (APTTMMQRKL…EMATCCGHSE (77 aa)). S4981 bears the O-(pantetheine 4'-phosphoryl)serine mark. A condensation 4 region spans residues 5058-5478 (QDLYPCSSLQ…QFCSEEDLQM (421 aa)). The interval 5498-5900 (FWQSVATYHD…IGRKDNQVKL (403 aa)) is adenylation 5. Residues 6039–6115 (TDTTFVGQLL…DLVTLIEKEG (77 aa)) form the Carrier 5 domain. At S6076 the chain carries O-(pantetheine 4'-phosphoryl)serine. Positions 6133-6567 (FALSPIQQLF…EVLGNMAMEL (435 aa)) are epimerization 3. The tract at residues 6607–7032 (VEDMYPCSPM…EALSHLRVSQ (426 aa)) is condensation 5. The 77-residue stretch at 7088–7164 (RDKDQVYNKL…TLLNCLRDKS (77 aa)) folds into the Carrier 6 domain. At S7125 the chain carries O-(pantetheine 4'-phosphoryl)serine. The segment at 7254–7603 (LDGEGPLDVA…SNTEVCFLYR (350 aa)) is condensation 6.

Belongs to the NRP synthetase family.

The enzyme catalyses D-allo-threonine + D-leucine + D-alanine + L-proline + 2 L-leucine + A = fusahexin + AH2 + 6 H2O. It functions in the pathway secondary metabolite biosynthesis. Nonribosomal peptide synthetase; part of the gene cluster that mediates the biosynthesis of the fusahexin, a cyclic hydrophobic hexapeptide with the amino acid sequence cyclo-(D-Ala-L-Leu-D-allo-Thr-L-Pro-D-Leu-L-Leu) that plays an important role in cell surface hydrophobicity. Fusahexin might also play a role in virulence, sensitivity to osmotic stress and oxidative stress. NRPS4 is the only enzyme within the cluster and its 5 catalytic modules are sufficient to produce fusahexin. The modules 1 to 4 incorporate respectively D-alanine, L-leucine, D-allo-threonine, and L-proline, which is supported by the presence of epimerase domains in modules 1 and 3, which incorporate D-amino acids. The terminal module is responsible for incorporation of the two adjacent leucine units, where the epimerase domain is only used to convert the first unit to D-leucine. The terminal condensation domain (Ct) is involved in cyclization with D-alanine and thereby releasing of fusahexin. The sequence is that of Nonribosomal peptide synthetase 4 from Gibberella zeae (strain ATCC MYA-4620 / CBS 123657 / FGSC 9075 / NRRL 31084 / PH-1) (Wheat head blight fungus).